Consider the following 922-residue polypeptide: Non-centrosomal microtubule array protein 1 (922 aa).

Residues M1–S10 are compositionally biased toward polar residues. Disordered stretches follow at residues M1 to P134, P250 to R277, K465 to L491, and T533 to S563. Composition is skewed to basic and acidic residues over residues S43–K54 and P70–A94. Residues S99–T113 are compositionally biased toward low complexity. Basic and acidic residues-rich tracts occupy residues R256–P276 and H468–G484. Low complexity predominate over residues S539–S563. The stretch at T564–Q728 forms a coiled coil.

It is found in the cytoplasm. Its subcellular location is the cytoskeleton. The protein localises to the apical cell membrane. The protein resides in the cell junction. It localises to the hemidesmosome. It is found in the adherens junction. Functionally, plays a role in the assembly of microtubule arrays in the germline acting redundantly with ptrn-1 to control circumferential microtubule assembly along the body which is necessary for larval development, viability, and morphology and integrity of the epidermis. Required for microtubule stability and anchorage by binding to microtubule minus ends. Recruited to hemidesomosomes in early embryonic elongation to direct the nucleation and growth of non-centrosomal microtubules. Its function is as follows. Required for normal nuclear migration in the embryonic epidermis. Directs the assembly of non-centrosomal microtubule arrays that determine the position of nuclei within intracellular compartments in the epidermis and this is independent of ptrn-1 activity. The chain is Non-centrosomal microtubule array protein 1 from Caenorhabditis elegans.